An 812-amino-acid polypeptide reads, in one-letter code: Valine--tRNA ligase (812 aa).

Residues 46-56 (PTVSGQLHIGH) carry the 'HIGH' region motif. The 'KMSKS' region signature appears at 536-540 (KMSKS). An ATP-binding site is contributed by Lys-539.

The protein belongs to the class-I aminoacyl-tRNA synthetase family. ValS type 2 subfamily. Monomer.

It is found in the cytoplasm. It carries out the reaction tRNA(Val) + L-valine + ATP = L-valyl-tRNA(Val) + AMP + diphosphate. Its function is as follows. Catalyzes the attachment of valine to tRNA(Val). As ValRS can inadvertently accommodate and process structurally similar amino acids such as threonine, to avoid such errors, it has a 'posttransfer' editing activity that hydrolyzes mischarged Thr-tRNA(Val) in a tRNA-dependent manner. This Rickettsia conorii (strain ATCC VR-613 / Malish 7) protein is Valine--tRNA ligase.